The sequence spans 425 residues: Histidine--tRNA ligase (425 aa).

The protein belongs to the class-II aminoacyl-tRNA synthetase family. As to quaternary structure, homodimer.

The protein localises to the cytoplasm. The catalysed reaction is tRNA(His) + L-histidine + ATP = L-histidyl-tRNA(His) + AMP + diphosphate + H(+). In Listeria monocytogenes serotype 4b (strain F2365), this protein is Histidine--tRNA ligase.